The sequence spans 121 residues: SVLELGKMILQETGKNAITSYGSYGCNCGWGHRGQPKDATDRCCFVHKCCYKKLTDCNHKTDRYSYSWKNKAIICEEKNPCLKEMCECDKAVAICLRENLDTYNKKYKAYFKLKCKKPDTC.

Cystine bridges form between Cys-26–Cys-115, Cys-28–Cys-44, Cys-43–Cys-95, Cys-49–Cys-121, Cys-50–Cys-88, Cys-57–Cys-81, and Cys-75–Cys-86. Residues 105 to 117 form an important for membrane-damaging activities in eukaryotes and bacteria; heparin-binding region; the sequence is KKYKAYFKLKCKK.

Belongs to the phospholipase A2 family. Group II subfamily. K49 sub-subfamily. In terms of assembly, monomer. As to expression, expressed by the venom gland.

It is found in the secreted. In terms of biological role, snake venom phospholipase A2 (PLA2) that lacks enzymatic activity. Displays edema-inducing activities. Is myotoxic. A model of myotoxic mechanism has been proposed: an apo Lys49-PLA2 is activated by the entrance of a hydrophobic molecule (e.g. fatty acid) at the hydrophobic channel of the protein leading to a reorientation of a monomer. This reorientation causes a transition between 'inactive' to 'active' states, causing alignment of C-terminal and membrane-docking sites (MDoS) side-by-side and putting the membrane-disruption sites (MDiS) in the same plane, exposed to solvent and in a symmetric position for both monomers. The MDoS region stabilizes the toxin on membrane by the interaction of charged residues with phospholipid head groups. Subsequently, the MDiS region destabilizes the membrane with penetration of hydrophobic residues. This insertion causes a disorganization of the membrane, allowing an uncontrolled influx of ions (i.e. calcium and sodium), and eventually triggering irreversible intracellular alterations and cell death. This chain is Basic phospholipase A2 homolog AppP2, found in Agkistrodon piscivorus piscivorus (Eastern cottonmouth).